Here is a 257-residue protein sequence, read N- to C-terminus: GTP cyclohydrolase FolE2 (257 aa).

Belongs to the GTP cyclohydrolase IV family.

It catalyses the reaction GTP + H2O = 7,8-dihydroneopterin 3'-triphosphate + formate + H(+). It functions in the pathway cofactor biosynthesis; 7,8-dihydroneopterin triphosphate biosynthesis; 7,8-dihydroneopterin triphosphate from GTP: step 1/1. Functionally, converts GTP to 7,8-dihydroneopterin triphosphate. This Dictyoglomus thermophilum (strain ATCC 35947 / DSM 3960 / H-6-12) protein is GTP cyclohydrolase FolE2.